A 725-amino-acid polypeptide reads, in one-letter code: Methionine--tRNA ligase (725 aa).

The 'HIGH' region motif lies at 27–37 (PYANGQIHIGH). Cys158, Cys161, Cys171, and Cys174 together coordinate Zn(2+). The 'KMSKS' region motif lies at 348-352 (KMSKS). Lys351 is an ATP binding site. The region spanning 619 to 725 (DFAKIDLRIA…SGAKPGMRVK (107 aa)) is the tRNA-binding domain.

Belongs to the class-I aminoacyl-tRNA synthetase family. MetG type 1 subfamily. In terms of assembly, homodimer. Requires Zn(2+) as cofactor.

It is found in the cytoplasm. The enzyme catalyses tRNA(Met) + L-methionine + ATP = L-methionyl-tRNA(Met) + AMP + diphosphate. In terms of biological role, is required not only for elongation of protein synthesis but also for the initiation of all mRNA translation through initiator tRNA(fMet) aminoacylation. The polypeptide is Methionine--tRNA ligase (Burkholderia mallei (strain NCTC 10247)).